The primary structure comprises 94 residues: Pyrimidine/purine nucleoside phosphorylase (94 aa).

Belongs to the nucleoside phosphorylase PpnP family.

The enzyme catalyses a purine D-ribonucleoside + phosphate = a purine nucleobase + alpha-D-ribose 1-phosphate. It carries out the reaction adenosine + phosphate = alpha-D-ribose 1-phosphate + adenine. It catalyses the reaction cytidine + phosphate = cytosine + alpha-D-ribose 1-phosphate. The catalysed reaction is guanosine + phosphate = alpha-D-ribose 1-phosphate + guanine. The enzyme catalyses inosine + phosphate = alpha-D-ribose 1-phosphate + hypoxanthine. It carries out the reaction thymidine + phosphate = 2-deoxy-alpha-D-ribose 1-phosphate + thymine. It catalyses the reaction uridine + phosphate = alpha-D-ribose 1-phosphate + uracil. The catalysed reaction is xanthosine + phosphate = alpha-D-ribose 1-phosphate + xanthine. Functionally, catalyzes the phosphorolysis of diverse nucleosides, yielding D-ribose 1-phosphate and the respective free bases. Can use uridine, adenosine, guanosine, cytidine, thymidine, inosine and xanthosine as substrates. Also catalyzes the reverse reactions. This is Pyrimidine/purine nucleoside phosphorylase from Escherichia coli (strain ATCC 8739 / DSM 1576 / NBRC 3972 / NCIMB 8545 / WDCM 00012 / Crooks).